The following is a 191-amino-acid chain: Calcium and integrin-binding protein 1 (191 aa).

Residue glycine 2 is the site of N-myristoyl glycine attachment. EF-hand domains are found at residues 103–138 (TPDIKSHYAFRIFDFDDDGTLDREDLSQLVNCLTGE) and 148–183 (EMKQLIDNILEESDIDRDGTINLSEFQHVISRSPDF). Residues aspartate 116, aspartate 118, aspartate 120, threonine 122, aspartate 127, aspartate 161, aspartate 163, aspartate 165, threonine 167, and glutamate 172 each contribute to the Ca(2+) site.

In terms of assembly, monomer. Interacts with the heterodimeric integrin alpha-IIb/beta3 (ITGA2B-ITGB3). Interacts with ITGA2B (via cytoplasmic domain); the interaction is direct and calcium-dependent. Interacts with the protein kinases PLK2/SNK and PRKDC (via the region immediately upstream of the kinase domain). Interacts with PLK3; the interaction inhibits PLK3 kinase activity. Interacts with PSEN2. Interacts (via C-terminus) with F8. Interacts with NBR1 (via C-terminus). Interacts with FEZ1 (via C-terminus). Interacts with UBR5 (via C-terminus); the interaction is sensitive to DNA damage, and may target CIB1 for ubiquitin-mediated degradation. Interacts with IFI6; the interaction is direct. Interacts with BCL2. Interacts with TAS1R2 (via C-terminus); the interaction is independent of the myristoylation state of CIB1. Interacts with ITPR3; the interaction occurs in a calcium dependent manner. Interacts with PTK2/FAK1. Interacts with MAP3K5; the interaction inhibits MAP3K5 activation by phosphorylation, and its subsequent interaction with TRAF2. Interacts (via C-terminal region) with STMN2 (via the N-terminal region); the interaction is direct, occurs in a calcium-dependent manner and attenuates the STMN2-induced neurite outgrowth inhibition. Interacts with SPHK1, the interaction occurs in a calcium-dependent manner. Interacts with ITGA2B (via C-terminal cytoplasmic tail); the interaction occurs upon platelet aggregation and is stabilized/increased in a calcium and magnesium-dependent manner. Interacts with PAK1 (via N-terminal region); the interaction is direct and occurs in a calcium-dependent manner. Interacts with RAC3 (via C-terminal region); the interaction induces their association with the cytoskeleton upon alpha-IIb/beta3 integrin-mediated adhesion. Interacts with ITGA5 and ITGAV. Interacts with MYO1C. Interacts with ITGA2B (via C-terminal cytoplasmic tail region). Interacts (via C-terminal region) with PPP3R1 isoform 1 and isoform 2; the interactions increase upon cardiomyocytes hypertrophy. Interacts with CACNA1C; the interaction increases upon cardiomyocytes hypertrophy. Interacts and forms a complex with TMC6 and TMC8; the interaction stabilizes each component of the complex. As to expression, expressed strongly in Sertoli cells, weakly in pachytene spermatocytes, round spermatids and condensing spermatids (at protein level). Expressed in testis. Expressed in cardiac myocytes and endothelial cells. Expressed in heart, liver, spleen, lung, kidney, brain and inner ear. In the inner ear, expressed in the vestibule, basilar membrane and spiral ganglion cells.

It localises to the membrane. Its subcellular location is the cell membrane. It is found in the sarcolemma. The protein localises to the apical cell membrane. The protein resides in the cell projection. It localises to the ruffle membrane. Its subcellular location is the filopodium tip. It is found in the growth cone. The protein localises to the lamellipodium. The protein resides in the cytoplasm. It localises to the cytoskeleton. Its subcellular location is the microtubule organizing center. It is found in the centrosome. The protein localises to the perinuclear region. The protein resides in the nucleus. It localises to the neuron projection. Its subcellular location is the perikaryon. Its function is as follows. Calcium-binding protein that plays a role in the regulation of numerous cellular processes, such as cell differentiation, cell division, cell proliferation, cell migration, thrombosis, angiogenesis, cardiac hypertrophy and apoptosis. Involved in bone marrow megakaryocyte differentiation by negatively regulating thrombopoietin-mediated signaling pathway. Participates in the endomitotic cell cycle of megakaryocyte, a form of mitosis in which both karyokinesis and cytokinesis are interrupted. Plays a role in integrin signaling by negatively regulating alpha-IIb/beta3 activation in thrombin-stimulated megakaryocytes preventing platelet aggregation. Up-regulates PTK2/FAK1 activity, and is also needed for the recruitment of PTK2/FAK1 to focal adhesions; it thus appears to play an important role in focal adhesion formation. Positively regulates cell migration on fibronectin in a CDC42-dependent manner, the effect being negatively regulated by PAK1. Functions as a negative regulator of stress activated MAP kinase (MAPK) signaling pathways. Down-regulates inositol 1,4,5-trisphosphate receptor-dependent calcium signaling. Involved in sphingosine kinase SPHK1 translocation to the plasma membrane in a N-myristoylation-dependent manner preventing TNF-alpha-induced apoptosis. Regulates serine/threonine-protein kinase PLK3 activity for proper completion of cell division progression. Plays a role in microtubule (MT) dynamics during neuronal development; disrupts the MT depolymerization activity of STMN2 attenuating NGF-induced neurite outgrowth and the MT reorganization at the edge of lamellipodia. Promotes cardiomyocyte hypertrophy via activation of the calcineurin/NFAT signaling pathway. Stimulates calcineurin PPP3R1 activity by mediating its anchoring to the sarcolemma. In ischemia-induced (pathological or adaptive) angiogenesis, stimulates endothelial cell proliferation, migration and microvessel formation by activating the PAK1 and ERK1/ERK2 signaling pathway. Also promotes cancer cell survival and proliferation. May regulate cell cycle and differentiation of spermatogenic germ cells, and/or differentiation of supporting Sertoli cells. Forms a complex with TMC6/EVER1 and TMC8/EVER2 in lymphocytes and keratynocytes where CIB1 stabilizes TMC6 and TMC8 levels and reciprocally. The polypeptide is Calcium and integrin-binding protein 1 (Cib1) (Mus musculus (Mouse)).